The primary structure comprises 200 residues: Probable GTP-binding protein EngB (200 aa).

One can recognise an EngB-type G domain in the interval 25 to 199 (SGYEVAFAGR…ISLLDRWYEW (175 aa)). Residues 33–40 (GRSNAGKS), 60–64 (GRTQL), 78–81 (DLPG), 145–148 (TKAD), and 178–180 (FSS) each bind GTP. Residues S40 and T62 each coordinate Mg(2+).

This sequence belongs to the TRAFAC class TrmE-Era-EngA-EngB-Septin-like GTPase superfamily. EngB GTPase family. Mg(2+) serves as cofactor.

Functionally, necessary for normal cell division and for the maintenance of normal septation. This is Probable GTP-binding protein EngB from Legionella pneumophila (strain Corby).